Reading from the N-terminus, the 854-residue chain is Putative Tricorn-like protease C-terminal subunit (854 aa).

The active-site Charge relay system is His539. The PDZ-like stretch occupies residues 554 to 646 (PIGGLGADYE…RVTVKLLKDE (93 aa)). Substrate is bound at residue Gly709. The Nucleophile role is filled by Ser756. Residue Glu814 is the Charge relay system of the active site.

It belongs to the peptidase S41B family.

It localises to the cytoplasm. Its function is as follows. Degrades oligopeptides in a sequential manner. In Sulfurisphaera tokodaii (strain DSM 16993 / JCM 10545 / NBRC 100140 / 7) (Sulfolobus tokodaii), this protein is Putative Tricorn-like protease C-terminal subunit (triC).